The primary structure comprises 921 residues: Protein translocase subunit SecA (921 aa).

Residues Q87, 105-109 (GEGKT), and D515 each bind ATP. A disordered region spans residues 872–901 (DMEVAGSTGDRGAALDIQPAPVRSGPKIGR). Positions 905, 907, 916, and 917 each coordinate Zn(2+).

It belongs to the SecA family. Monomer and homodimer. Part of the essential Sec protein translocation apparatus which comprises SecA, SecYEG and auxiliary proteins SecDF-YajC and YidC. Zn(2+) serves as cofactor.

Its subcellular location is the cell inner membrane. It localises to the cytoplasm. It catalyses the reaction ATP + H2O + cellular proteinSide 1 = ADP + phosphate + cellular proteinSide 2.. Part of the Sec protein translocase complex. Interacts with the SecYEG preprotein conducting channel. Has a central role in coupling the hydrolysis of ATP to the transfer of proteins into and across the cell membrane, serving both as a receptor for the preprotein-SecB complex and as an ATP-driven molecular motor driving the stepwise translocation of polypeptide chains across the membrane. In Polynucleobacter asymbioticus (strain DSM 18221 / CIP 109841 / QLW-P1DMWA-1) (Polynucleobacter necessarius subsp. asymbioticus), this protein is Protein translocase subunit SecA.